Consider the following 1407-residue polypeptide: DNA-directed RNA polymerase subunit beta' (1407 aa).

The Zn(2+) site is built by C70, C72, C85, and C88. Residues D460, D462, and D464 each coordinate Mg(2+). Residues C814, C888, C895, and C898 each contribute to the Zn(2+) site. Residue K972 is modified to N6-acetyllysine.

This sequence belongs to the RNA polymerase beta' chain family. In terms of assembly, the RNAP catalytic core consists of 2 alpha, 1 beta, 1 beta' and 1 omega subunit. When a sigma factor is associated with the core the holoenzyme is formed, which can initiate transcription. The cofactor is Mg(2+). Requires Zn(2+) as cofactor.

The catalysed reaction is RNA(n) + a ribonucleoside 5'-triphosphate = RNA(n+1) + diphosphate. In terms of biological role, DNA-dependent RNA polymerase catalyzes the transcription of DNA into RNA using the four ribonucleoside triphosphates as substrates. The protein is DNA-directed RNA polymerase subunit beta' of Shigella flexneri serotype 5b (strain 8401).